We begin with the raw amino-acid sequence, 611 residues long: Dihydroxy-acid dehydratase (611 aa).

Aspartate 81 contacts Mg(2+). Cysteine 122 contributes to the [2Fe-2S] cluster binding site. Residues aspartate 123 and lysine 124 each coordinate Mg(2+). Lysine 124 carries the N6-carboxylysine modification. [2Fe-2S] cluster is bound at residue cysteine 195. Glutamate 491 contributes to the Mg(2+) binding site. Serine 517 (proton acceptor) is an active-site residue.

This sequence belongs to the IlvD/Edd family. In terms of assembly, homodimer. [2Fe-2S] cluster is required as a cofactor. It depends on Mg(2+) as a cofactor.

The catalysed reaction is (2R)-2,3-dihydroxy-3-methylbutanoate = 3-methyl-2-oxobutanoate + H2O. The enzyme catalyses (2R,3R)-2,3-dihydroxy-3-methylpentanoate = (S)-3-methyl-2-oxopentanoate + H2O. The protein operates within amino-acid biosynthesis; L-isoleucine biosynthesis; L-isoleucine from 2-oxobutanoate: step 3/4. It functions in the pathway amino-acid biosynthesis; L-valine biosynthesis; L-valine from pyruvate: step 3/4. Functionally, functions in the biosynthesis of branched-chain amino acids. Catalyzes the dehydration of (2R,3R)-2,3-dihydroxy-3-methylpentanoate (2,3-dihydroxy-3-methylvalerate) into 2-oxo-3-methylpentanoate (2-oxo-3-methylvalerate) and of (2R)-2,3-dihydroxy-3-methylbutanoate (2,3-dihydroxyisovalerate) into 2-oxo-3-methylbutanoate (2-oxoisovalerate), the penultimate precursor to L-isoleucine and L-valine, respectively. The protein is Dihydroxy-acid dehydratase of Brucella melitensis biotype 1 (strain ATCC 23456 / CCUG 17765 / NCTC 10094 / 16M).